The chain runs to 779 residues: Translation initiation factor IF-2 (779 aa).

The interval 44-193 is disordered; the sequence is RQLDNAVDGT…TPPKPKELPE (150 aa). A compositionally biased stretch (basic and acidic residues) spans 53–65; the sequence is TNKKAEAPKKETT. Over residues 66–81 the composition is skewed to polar residues; it reads SNENGNSKGPNKPNMT. 2 stretches are compositionally biased toward low complexity: residues 82 to 93 and 117 to 167; these read NSNEKSNKPNKP and ANTS…NNKG. The 170-residue stretch at 280 to 449 folds into the tr-type G domain; it reads ERPPVVTIMG…LLVSEVEELK (170 aa). Residues 289-296 are G1; it reads GHVDHGKT. A GTP-binding site is contributed by 289–296; it reads GHVDHGKT. Residues 314–318 are G2; sequence GITQH. Residues 335-338 are G3; it reads DTPG. GTP-binding positions include 335–339 and 389–392; these read DTPGH and NKID. A G4 region spans residues 389-392; sequence NKID. Positions 425–427 are G5; it reads SAK.

The protein belongs to the TRAFAC class translation factor GTPase superfamily. Classic translation factor GTPase family. IF-2 subfamily.

The protein resides in the cytoplasm. Functionally, one of the essential components for the initiation of protein synthesis. Protects formylmethionyl-tRNA from spontaneous hydrolysis and promotes its binding to the 30S ribosomal subunits. Also involved in the hydrolysis of GTP during the formation of the 70S ribosomal complex. The chain is Translation initiation factor IF-2 from Listeria monocytogenes serovar 1/2a (strain ATCC BAA-679 / EGD-e).